Here is a 188-residue protein sequence, read N- to C-terminus: Putative manganese efflux pump MntP (188 aa).

6 helical membrane passes run 3–23 (LYAL…VALA), 35–55 (IAAT…AGWV), 70–90 (WAAF…GLSG), 104–126 (WLTV…GLAF), 140–160 (MATT…GVLF), and 167–187 (AGGL…LGLI).

The protein belongs to the MntP (TC 9.B.29) family.

The protein localises to the cell inner membrane. Probably functions as a manganese efflux pump. The protein is Putative manganese efflux pump MntP of Neisseria meningitidis serogroup C / serotype 2a (strain ATCC 700532 / DSM 15464 / FAM18).